The sequence spans 272 residues: Undecaprenyl-diphosphatase (272 aa).

7 helical membrane-spanning segments follow: residues 6–26, 45–65, 92–112, 115–135, 189–209, 225–245, and 251–271; these read SLLI…LPVS, AKTF…VMFW, THIL…HDVI, LFYP…LLAA, YAAS…ATVL, MFAV…KTFL, and ISFV…YMVF.

This sequence belongs to the UppP family.

It localises to the cell inner membrane. The enzyme catalyses di-trans,octa-cis-undecaprenyl diphosphate + H2O = di-trans,octa-cis-undecaprenyl phosphate + phosphate + H(+). Its function is as follows. Catalyzes the dephosphorylation of undecaprenyl diphosphate (UPP). Confers resistance to bacitracin. The chain is Undecaprenyl-diphosphatase from Pectobacterium carotovorum subsp. carotovorum (strain PC1).